We begin with the raw amino-acid sequence, 284 residues long: uncharacterized protein (284 aa).

This is an uncharacterized protein from Streptomyces fradiae (Streptomyces roseoflavus).